A 419-amino-acid chain; its full sequence is Methylthioribose kinase (419 aa).

The ATP site is built by Asn49 and Lys64. Asp239 is a binding site for substrate. 256-258 (DPE) contacts ATP. A substrate-binding site is contributed by Arg365.

The protein belongs to the methylthioribose kinase family. Homodimer.

It carries out the reaction 5-(methylsulfanyl)-D-ribose + ATP = 5-(methylsulfanyl)-alpha-D-ribose 1-phosphate + ADP + H(+). The enzyme catalyses 5-deoxy-D-ribose + ATP = 5-deoxy-alpha-D-ribose 1-phosphate + ADP + H(+). It participates in amino-acid biosynthesis; L-methionine biosynthesis via salvage pathway; S-methyl-5-thio-alpha-D-ribose 1-phosphate from S-methyl-5'-thioadenosine (hydrolase route): step 2/2. Functionally, catalyzes the phosphorylation of methylthioribose into methylthioribose-1-phosphate. Also catalyzes the phosphorylation of 5-deoxyribose to 5-deoxyribose-1-phosphate. Part of a bifunctional DHAP-shunt salvage pathway for SAM by-products. The protein is Methylthioribose kinase of Escherichia coli O45:K1 (strain S88 / ExPEC).